Reading from the N-terminus, the 862-residue chain is Transcription initiation factor TFIID subunit 4B (862 aa).

A sufficient for interaction with ZNF628 region spans residues 100–241 (NTTTIQFPAN…TPSNEPNLKA (142 aa)). Over residues 219-237 (VTTLKPSSLGASSTPSNEP) the composition is skewed to polar residues. The segment at 219 to 239 (VTTLKPSSLGASSTPSNEPNL) is disordered. Positions 256–353 (LENVKKCKNF…CVQQTSSDMV (98 aa)) constitute a TAFH domain. Positions 511-533 (PGPVLSQPAGIPQAVQVKQLVVQ) are required for interaction with P65/RELA. Residues 516 to 556 (SQPAGIPQAVQVKQLVVQQPSGGNEKQVTTISHSSTLTIQK) carry the Nuclear export signal motif. Serine 595 carries the post-translational modification Phosphoserine. Residues 653–702 (PFLFIGALQKRILDIGKKHDITELNSDAVNLISQATQERLRGLLEKLTAI) enclose the Histone-fold domain. The stretch at 722-787 (TRSQLKFLEK…LAQIQHRDAN (66 aa)) forms a coiled coil. The tract at residues 830-862 (PRITRICLRDLIFCMEQEREMKYSRALYLALLK) is required for interaction with TAF12.

Belongs to the TAF4 family. In terms of assembly, TFIID is composed of TATA binding protein (TBP) and a number of TBP-associated factors (TAFs). Heterodimerizes with TAF12/TFII20 via the C-terminal H2A-like histone-fold domain. This heterodimer forms a histone-like octamer with the TAF6/TAFII70-TAF9/TAFII31 heterodimer. Interacts with P65/RELA homodimers and P65/RELA-REL heterodimers. Interaction with POU2AF1, via its C-terminal activation domain, is required for octamer-dependent transcription. Interacts with ZNF628. In terms of processing, under stimulation by forskolin, Isoform 1 is phosphorylated by protein kinase A (PKA). Preferentially expressed in ovarian granulosa cells (at protein level). Highly expressed in B-cells.

It localises to the nucleus. The protein resides in the cytoplasm. Functionally, cell type-specific subunit of the general transcription factor TFIID that may function as a gene-selective coactivator in certain cells. TFIID is a multimeric protein complex that plays a central role in mediating promoter responses to various activators and repressors. TAF4B is a transcriptional coactivator of the p65/RELA NF-kappa-B subunit. Involved in the activation of a subset of antiapoptotic genes including TNFAIP3. May be involved in regulating folliculogenesis. Through interaction with OCBA/POU2AF1, acts as a coactivator of B-cell-specific transcription. Plays a role in spermiogenesis and oogenesis. This is Transcription initiation factor TFIID subunit 4B (TAF4B) from Homo sapiens (Human).